A 430-amino-acid polypeptide reads, in one-letter code: Tol-Pal system protein TolB (430 aa).

The signal sequence occupies residues 1-21 (MKQALRVAFGFLILWASVLHA).

The protein belongs to the TolB family. In terms of assembly, the Tol-Pal system is composed of five core proteins: the inner membrane proteins TolA, TolQ and TolR, the periplasmic protein TolB and the outer membrane protein Pal. They form a network linking the inner and outer membranes and the peptidoglycan layer.

It is found in the periplasm. In terms of biological role, part of the Tol-Pal system, which plays a role in outer membrane invagination during cell division and is important for maintaining outer membrane integrity. TolB occupies a key intermediary position in the Tol-Pal system because it communicates directly with both membrane-embedded components, Pal in the outer membrane and TolA in the inner membrane. This is Tol-Pal system protein TolB from Shigella boydii serotype 18 (strain CDC 3083-94 / BS512).